The chain runs to 652 residues: Regulator of DNA class I crossover intermediates 1 (652 aa).

A DNA-binding region (binds DNA containing a D-loop) is located at residues 1-228 (MNWVGGSRSR…APYKRTNSSE (228 aa)). Disordered stretches follow at residues 464-512 (YLES…KATE) and 621-652 (EKES…SNSL). The span at 467-477 (SSQSSQSASYS) shows a compositional bias: low complexity. Composition is skewed to polar residues over residues 478–491 (PRPT…STDL) and 639–652 (DTTG…SNSL).

Interacts with MSH5. Interacts with TEX11. In terms of tissue distribution, expressed mainly in testis (at protein level). Expressed in spermatogonia and enriched in spermatocytes; absent in testicular somatic cells (at protein level). No expression or low levels in other tissues.

The protein resides in the chromosome. Involved in recombination, probably acting by stabilizing recombination intermediates during meiotic crossover formation. Required for normal germline development and fertility. Required for meiotic progression, complete chromosomal synapsis and crossover formation. Binds double-stranded DNA. However, also binds branched DNA molecules, such as those containing a D-loop or Holliday junction structure. Probably not required for formation of DNA double-strand breaks (DSBs). Also binds RNA in an RNA structure-independent manner, with a preference for binding 3'-UTR regions of mRNAs; may stabilize bound RNAs. This is Regulator of DNA class I crossover intermediates 1 from Mus musculus (Mouse).